The primary structure comprises 152 residues: DNA-binding transcriptional activator DecR (152 aa).

In terms of domain architecture, HTH asnC-type spans 2–63; the sequence is LDKIDRKLLA…LLDPEKIGLG (62 aa). The segment at residues 21-40 is a DNA-binding region (H-T-H motif); that stretch reads LQALAEAVNLTTTPCWKRLK.

In terms of biological role, plays a role in L-cysteine detoxification. Binds to the dlsT(yhaO)-yhaM operon promoter in the presence but not absence of L-cysteine; activates transcription from the dlsT(yhaO)-yhaM operon. The chain is DNA-binding transcriptional activator DecR (decR) from Escherichia coli O157:H7.